We begin with the raw amino-acid sequence, 412 residues long: Arginine biosynthesis bifunctional protein ArgJ (412 aa).

Residues threonine 162, lysine 188, threonine 199, glutamate 285, asparagine 407, and threonine 412 each coordinate substrate. The active-site Nucleophile is the threonine 199.

It belongs to the ArgJ family. As to quaternary structure, heterotetramer of two alpha and two beta chains.

Its subcellular location is the cytoplasm. The enzyme catalyses N(2)-acetyl-L-ornithine + L-glutamate = N-acetyl-L-glutamate + L-ornithine. It catalyses the reaction L-glutamate + acetyl-CoA = N-acetyl-L-glutamate + CoA + H(+). Its pathway is amino-acid biosynthesis; L-arginine biosynthesis; L-ornithine and N-acetyl-L-glutamate from L-glutamate and N(2)-acetyl-L-ornithine (cyclic): step 1/1. The protein operates within amino-acid biosynthesis; L-arginine biosynthesis; N(2)-acetyl-L-ornithine from L-glutamate: step 1/4. In terms of biological role, catalyzes two activities which are involved in the cyclic version of arginine biosynthesis: the synthesis of N-acetylglutamate from glutamate and acetyl-CoA as the acetyl donor, and of ornithine by transacetylation between N(2)-acetylornithine and glutamate. The polypeptide is Arginine biosynthesis bifunctional protein ArgJ (Staphylococcus saprophyticus subsp. saprophyticus (strain ATCC 15305 / DSM 20229 / NCIMB 8711 / NCTC 7292 / S-41)).